The primary structure comprises 187 residues: Tumor necrosis factor ligand superfamily member 4 (187 aa).

Over 1–23 (MEGVRPLEENVGNAPRPRFERNK) the chain is Cytoplasmic. The helical; Signal-anchor for type II membrane protein transmembrane segment at 24–44 (LLLVASVVQALGLLLCLTYVC) threads the bilayer. At 45 to 187 (QHSHAPEVSL…LQNPGGYCAP (143 aa)) the chain is on the extracellular side. Positions 58 to 177 (PIENIMTQLQ…SVNAGELIVI (120 aa)) constitute a THD domain. Cystine bridges form between cysteine 74/cysteine 164 and cysteine 101/cysteine 185. Residues asparagine 94 and asparagine 156 are each glycosylated (N-linked (GlcNAc...) asparagine).

Belongs to the tumor necrosis factor family. As to quaternary structure, homotrimer.

It is found in the membrane. In terms of biological role, cytokine that binds to TNFRSF4. Co-stimulates T-cell proliferation and cytokine production. This chain is Tumor necrosis factor ligand superfamily member 4 (TNFSF4), found in Oryctolagus cuniculus (Rabbit).